Consider the following 194-residue polypeptide: Peptidyl-tRNA hydrolase (194 aa).

Y17 contacts tRNA. The Proton acceptor role is filled by H22. TRNA is bound by residues Y68, N70, and N116.

It belongs to the PTH family. As to quaternary structure, monomer.

The protein localises to the cytoplasm. The enzyme catalyses an N-acyl-L-alpha-aminoacyl-tRNA + H2O = an N-acyl-L-amino acid + a tRNA + H(+). Its function is as follows. Hydrolyzes ribosome-free peptidyl-tRNAs (with 1 or more amino acids incorporated), which drop off the ribosome during protein synthesis, or as a result of ribosome stalling. Functionally, catalyzes the release of premature peptidyl moieties from peptidyl-tRNA molecules trapped in stalled 50S ribosomal subunits, and thus maintains levels of free tRNAs and 50S ribosomes. This chain is Peptidyl-tRNA hydrolase, found in Pseudomonas entomophila (strain L48).